The following is a 360-amino-acid chain: DNA replication and repair protein RecF (360 aa).

Position 33-40 (33-40 (GENGSGKT)) interacts with ATP.

Belongs to the RecF family.

It is found in the cytoplasm. The RecF protein is involved in DNA metabolism; it is required for DNA replication and normal SOS inducibility. RecF binds preferentially to single-stranded, linear DNA. It also seems to bind ATP. The protein is DNA replication and repair protein RecF of Rickettsia rickettsii (strain Iowa).